The chain runs to 179 residues: Inner membrane-spanning protein YciB (179 aa).

5 helical membrane passes run 22–42, 50–70, 76–96, 121–141, and 149–169; these read IYAATTALIVATAIVLIYSWV, MALITFVLVAVFGGLTLFFHN, WKVTVIYALFAGALLFSQWVM, LAWAVFFILCGLANIYIAFWL, and FKVFGLTALTLVFTLLSGIYI.

It belongs to the YciB family.

Its subcellular location is the cell inner membrane. Functionally, plays a role in cell envelope biogenesis, maintenance of cell envelope integrity and membrane homeostasis. The polypeptide is Inner membrane-spanning protein YciB (Klebsiella pneumoniae (strain 342)).